Here is a 444-residue protein sequence, read N- to C-terminus: Crh-like protein 3 (444 aa).

Positions 1–19 (MVGKSTLLSVLASASVAFA) are cleaved as a signal peptide. A disulfide bridge connects residues Cys-27 and Cys-34. In terms of domain architecture, GH16 spans 57 to 271 (SLESCVPEPV…WAGGEIDWNS (215 aa)). The active-site Nucleophile is Glu-157. Glu-161 (proton donor) is an active-site residue. Glu-161 contacts chitin. N-linked (GlcNAc...) asparagine glycans are attached at residues Asn-187 and Asn-228. The chitin site is built by Trp-248 and Thr-259. N-linked (GlcNAc...) asparagine glycans are attached at residues Asn-315, Asn-323, Asn-336, and Asn-371. Ser-415 carries the GPI-anchor amidated serine lipid modification. Positions 416-444 (ADSLVANQERVLKGSLFAGIVAVVAMMAL) are cleaved as a propeptide — removed in mature form.

The protein belongs to the glycosyl hydrolase 16 family. CRH1 subfamily. In terms of assembly, forms homodimers as well as heterodimers with other crh protein members crh1 and crh2. Dimerization may be necessary for the transglycosylation activity.

It localises to the cell membrane. The enzyme catalyses Random endo-hydrolysis of N-acetyl-beta-D-glucosaminide (1-&gt;4)-beta-linkages in chitin and chitodextrins.. Its function is as follows. Dual chitinase/transglycosylase that plays a role in cell wall architecture. Chitinase and transglycosylase activities are coupled. Required for the polysaccharide cross-linking at the septa and the cell wall. More specifically, transfers chitin to 1,6-beta-glucan in the cell wall. The polypeptide is Crh-like protein 3 (Botryotinia fuckeliana (strain B05.10) (Noble rot fungus)).